Here is a 468-residue protein sequence, read N- to C-terminus: Effector protein hopD2 (468 aa).

Residues 1–20 (MNPLQPIQHSITNSQMSGGQ) show a composition bias toward polar residues. Residues 1 to 35 (MNPLQPIQHSITNSQMSGGQQLEAEGSQAHNSYSH) form a disordered region. A Tyrosine-protein phosphatase domain is found at 143 to 468 (DASSPPSAND…TQWRAKIALE (326 aa)). The active-site Phosphocysteine intermediate is Cys378.

As to quaternary structure, interacts with EFR and FLS2 (via the kinase and cytoplasmic domains).

It is found in the secreted. It carries out the reaction O-phospho-L-tyrosyl-[protein] + H2O = L-tyrosyl-[protein] + phosphate. Its activity is regulated as follows. Inhibited by sodium orthovanadate. In terms of biological role, effector showing tyrosine-phosphatase activity required for host defense suppression. Functions inside plant cells causing suppression of HR (hypersensitive response), PR1 gene expression and oxidative burst probably by interfering with a MAPK (mitogen-activated protein kinase) pathway. MAPK cascades are known to activate defense-related transcription factors. Inhibits plant pattern-recognition receptors (PRRs) activation. This is Effector protein hopD2 (hopD2) from Pseudomonas syringae pv. tomato (strain ATCC BAA-871 / DC3000).